The sequence spans 223 residues: Neurotrophic factor BDNF precursor form (223 aa).

Positions 1–5 are cleaved as a signal peptide; that stretch reads SCMKA. A propeptide spanning residues 6-114 is cleaved from the precursor; that stretch reads APMKEASIRG…AANMSMRVRR (109 aa). N-linked (GlcNAc...) asparagine glycosylation occurs at Asn-107. Disulfide bonds link Cys-127/Cys-194 and Cys-172/Cys-223.

It belongs to the NGF-beta family.

It is found in the secreted. Its function is as follows. Promotes the survival of neuronal populations that are all located either in the central nervous system or directly connected to it. In Tropidophis haetianus (Haitian dwarf boa), this protein is Neurotrophic factor BDNF precursor form (BDNF).